The primary structure comprises 388 residues: 2-epi-5-epi-valiolone synthase (388 aa).

NAD(+) is bound by residues 92 to 95 (ERNK), 124 to 128 (GIVAD), 148 to 149 (TT), Lys161, Lys170, and 188 to 191 (LLAT). Zn(2+)-binding residues include Glu203, His267, and His283.

It belongs to the sugar phosphate cyclases superfamily. EEVS-like family. The cofactor is NAD(+). Co(2+) is required as a cofactor. Zn(2+) serves as cofactor.

The enzyme catalyses D-sedoheptulose 7-phosphate = 2-epi-5-epi-valiolone + phosphate. Catalyzes the cyclization of D-sedoheptulose 7-phosphate to 2-epi-5-epi-valiolone. Probably involved in acarbose biosynthesis. The chain is 2-epi-5-epi-valiolone synthase from Streptomyces glaucescens.